The chain runs to 136 residues: Large ribosomal subunit protein uL16c (136 aa).

Belongs to the universal ribosomal protein uL16 family. As to quaternary structure, part of the 50S ribosomal subunit.

The protein resides in the plastid. It is found in the chloroplast. The chain is Large ribosomal subunit protein uL16c from Guizotia abyssinica (Niger).